We begin with the raw amino-acid sequence, 427 residues long: Mitochondrial distribution and morphology protein 12 (427 aa).

Residues 1 to 387 enclose the SMP-LTD domain; sequence MSFDINWNQL…WPSWICIDMN (387 aa). Residues 81 to 96 are compositionally biased toward basic and acidic residues; that stretch reads NDSKDEHLKNHGDGIN. Disordered stretches follow at residues 81–168 and 387–427; these read NDSK…APPL and NDDD…EAGE. A compositionally biased stretch (acidic residues) spans 106–133; the sequence is LDDEDEDDEDDDEDDEDEEEEDEDDYDD. The span at 146–161 shows a compositional bias: polar residues; that stretch reads LNFNENSTTPSANSFA. Acidic residues predominate over residues 387–402; it reads NDDDDEEEEEESEDND. Positions 411–427 are enriched in basic and acidic residues; that stretch reads NDGKHGDGRTDETEAGE.

It belongs to the MDM12 family. Component of the ER-mitochondria encounter structure (ERMES) or MDM complex, composed of MMM1, MDM10, MDM12 and MDM34. An MMM1 homodimer associates with one molecule of MDM12 on each side in a pairwise head-to-tail manner, and the SMP-LTD domains of MMM1 and MDM12 generate a continuous hydrophobic tunnel for phospholipid trafficking.

The protein localises to the mitochondrion outer membrane. It is found in the endoplasmic reticulum membrane. Functionally, component of the ERMES/MDM complex, which serves as a molecular tether to connect the endoplasmic reticulum (ER) and mitochondria. Components of this complex are involved in the control of mitochondrial shape and protein biogenesis, and function in nonvesicular lipid trafficking between the ER and mitochondria. MDM12 is required for the interaction of the ER-resident membrane protein MMM1 and the outer mitochondrial membrane-resident beta-barrel protein MDM10. The MDM12-MMM1 subcomplex functions in the major beta-barrel assembly pathway that is responsible for biogenesis of all mitochondrial outer membrane beta-barrel proteins, and acts in a late step after the SAM complex. The MDM10-MDM12-MMM1 subcomplex further acts in the TOM40-specific pathway after the action of the MDM12-MMM1 complex. Essential for establishing and maintaining the structure of mitochondria and maintenance of mtDNA nucleoids. This is Mitochondrial distribution and morphology protein 12 from Candida albicans (strain WO-1) (Yeast).